The following is a 57-amino-acid chain: Large ribosomal subunit protein bL32 (57 aa).

Residues 1 to 23 form a disordered region; the sequence is MAVPKKRTSKTRTNRRRAQKKAR.

The protein belongs to the bacterial ribosomal protein bL32 family.

In Natranaerobius thermophilus (strain ATCC BAA-1301 / DSM 18059 / JW/NM-WN-LF), this protein is Large ribosomal subunit protein bL32.